Reading from the N-terminus, the 314-residue chain is Probable cell division protein WhiA (314 aa).

A DNA-binding region (H-T-H motif) is located at residues 274–308; sequence SLKELGEMVSTGPISKSGVNHRLRKLNDLADKIRN.

The protein belongs to the WhiA family.

Involved in cell division and chromosome segregation. This is Probable cell division protein WhiA from Staphylococcus aureus (strain Mu3 / ATCC 700698).